A 205-amino-acid polypeptide reads, in one-letter code: Large ribosomal subunit protein uL4 (205 aa).

The disordered stretch occupies residues 56–76; that stretch reads VSGTTAKPYRQKHTGRARQGS.

This sequence belongs to the universal ribosomal protein uL4 family. Part of the 50S ribosomal subunit.

Its function is as follows. One of the primary rRNA binding proteins, this protein initially binds near the 5'-end of the 23S rRNA. It is important during the early stages of 50S assembly. It makes multiple contacts with different domains of the 23S rRNA in the assembled 50S subunit and ribosome. Functionally, forms part of the polypeptide exit tunnel. This chain is Large ribosomal subunit protein uL4, found in Ehrlichia ruminantium (strain Welgevonden).